Reading from the N-terminus, the 211-residue chain is Thymidylate kinase (211 aa).

7–14 (GIDGCGKT) is a binding site for ATP.

This sequence belongs to the thymidylate kinase family.

The catalysed reaction is dTMP + ATP = dTDP + ADP. Phosphorylation of dTMP to form dTDP in both de novo and salvage pathways of dTTP synthesis. This chain is Thymidylate kinase, found in Anaplasma marginale (strain Florida).